A 249-amino-acid polypeptide reads, in one-letter code: 1-(5-phosphoribosyl)-5-[(5-phosphoribosylamino)methylideneamino] imidazole-4-carboxamide isomerase (249 aa).

Catalysis depends on Asp-8, which acts as the Proton acceptor. Asp-129 serves as the catalytic Proton donor.

The protein belongs to the HisA/HisF family.

The protein localises to the cytoplasm. The enzyme catalyses 1-(5-phospho-beta-D-ribosyl)-5-[(5-phospho-beta-D-ribosylamino)methylideneamino]imidazole-4-carboxamide = 5-[(5-phospho-1-deoxy-D-ribulos-1-ylimino)methylamino]-1-(5-phospho-beta-D-ribosyl)imidazole-4-carboxamide. Its pathway is amino-acid biosynthesis; L-histidine biosynthesis; L-histidine from 5-phospho-alpha-D-ribose 1-diphosphate: step 4/9. The chain is 1-(5-phosphoribosyl)-5-[(5-phosphoribosylamino)methylideneamino] imidazole-4-carboxamide isomerase from Rhizobium rhizogenes (strain K84 / ATCC BAA-868) (Agrobacterium radiobacter).